A 476-amino-acid chain; its full sequence is Ataxin-10 (476 aa).

Omega-N-methylarginine is present on Arg-10. 2 positions are modified to phosphoserine: Ser-13 and Ser-78. Thr-83 is subject to Phosphothreonine. Ser-431 is subject to Phosphoserine.

Belongs to the ataxin-10 family. In terms of assembly, homooligomer. Interacts with GNB2. Interacts with IQCB1. Interacts with OGT. In terms of processing, polyubiquitinated. Post-translationally, phosphorylation at Ser-13 by AURKB promotes the association of ATXN10 with PLK1. Phosphorylation at Ser-78 and Thr-83 by PLK1 may play a role in the regulation of cytokinesis and may stimulate the proteasome-mediated degradation of ATXN10.

The protein localises to the cytoplasm. Its subcellular location is the perinuclear region. It localises to the midbody. It is found in the cytoskeleton. The protein resides in the cilium basal body. The protein localises to the microtubule organizing center. Its subcellular location is the centrosome. It localises to the centriole. May play a role in the regulation of cytokinesis. May play a role in signaling by stimulating protein glycosylation. Induces neuritogenesis by activating the Ras-MAP kinase pathway and is necessary for the survival of cerebellar neurons. Does not appear to play a major role in ciliogenesis. This chain is Ataxin-10 (ATXN10), found in Pongo abelii (Sumatran orangutan).